Consider the following 256-residue polypeptide: Tumor necrosis factor receptor superfamily member 9 (256 aa).

An N-terminal signal peptide occupies residues 1–23; it reads MGNNCYNVVVIVLLLVGCEKVGA. TNFR-Cys repeat units follow at residues 24–45, 46–85, 86–117, and 118–159; these read VQNS…PVCK, SCPP…NAEC, ECIE…QGCK, and TCSL…VVCG. The Extracellular portion of the chain corresponds to 24-187; the sequence is VQNSCDNCQP…GPGGHSLQVL (164 aa). Disulfide bonds link Cys28/Cys37, Cys31/Cys44, Cys47/Cys61, Cys64/Cys77, Cys67/Cys85, Cys87/Cys93, Cys98/Cys105, Cys101/Cys116, and Cys119/Cys133. N-linked (GlcNAc...) asparagine glycans are attached at residues Asn128 and Asn138. The cysteines at positions 139 and 158 are disulfide-linked. Residues 188–208 form a helical membrane-spanning segment; that stretch reads TLFLALTSALLLALIFITLLF. Topologically, residues 209 to 256 are cytoplasmic; that stretch reads SVLKWIRKKFPHIFKQPFKKTTGAAQEEDACSCRCPQEEEGGGGGYEL.

In terms of assembly, predominantly homodimeric, but may also exist as a monomer. Associates with p56-LCK. Interacts with TRAF1, TRAF2 and TRAF3. Expressed in activated thymocytes, splenic T cells, CD4(+), and CD8(+) T-cells.

The protein localises to the cell membrane. Functionally, receptor for TNFSF9/4-1BBL. Conveys a signal that enhances CD8(+) T-cell survival, cytotoxicity, and mitochondrial activity, thereby promoting immunity against viruses and tumors. The sequence is that of Tumor necrosis factor receptor superfamily member 9 (Tnfrsf9) from Mus musculus (Mouse).